Reading from the N-terminus, the 785-residue chain is Hypha-specific G1 cyclin-related protein 1 (785 aa).

A disordered region spans residues 1–42; sequence MINITKPLTPKSISQQKQQQQHPYKNISTTKSNNNPQASGSK. Residues 22–42 show a composition bias toward polar residues; it reads HPYKNISTTKSNNNPQASGSK. Residues 71 to 238 form the Cyclin N-terminal domain; it reads DIYDIMVNLI…VLNTLEWSLN (168 aa). Disordered stretches follow at residues 408-433, 447-679, and 750-774; these read TTTTTTTTSDNISTTPTSSTGSTTPV, VSST…SKFN, and NNSGNGKGNGNGGSGTPISENDSPI. Low complexity-rich tracts occupy residues 447-473 and 484-512; these read VSSTSSVASSSNANTPSSSCSTTSTTP and NYSNYSNYSNYSNSSTSLGLTNNNNNNTT. Positions 513–535 are enriched in polar residues; the sequence is ISPVDSTTINSHTKNSSQLNYQY. The segment covering 579–613 has biased composition (low complexity); sequence NSANKNSNKSNSANNNNTTTIATTTTTTTNNNNNS. Over residues 621 to 631 the composition is skewed to polar residues; that stretch reads LSYNNYFNSPN. A compositionally biased stretch (low complexity) spans 646–679; it reads QQQQQNQGQNQQQPLQLYQGDNNNNGTNTNSKFN. Residues 754-764 show a composition bias toward gly residues; the sequence is NGKGNGNGGSG. Positions 765-774 are enriched in polar residues; the sequence is TPISENDSPI.

Belongs to the cyclin family. In terms of assembly, interacts with CDC28.

In terms of biological role, hypha-specific G1 cyclin-related protein involved in regulation of morphogenesis and opaque cells filamentous growth, and required for both conventional and pheromone-stimulated biofilm formation. Required to maintain hyphal tip localization of actin and SPA2. Regulates the CDC28 kinase during hyphal growth. The CDC28-HGC1 complex phosphorylates and prevents RGA2 from localizing to hyphal tips, leading to localized CDC42 activation for hyphal extension. The CDC28-HGC1 complex also phosphorylates SEC2 and maintains CDC11 phosphorylation throughout hyphal growth. Moreover CDC28-HGC1 phosphorylation of EFG1 represses cell separation genes during hyphal growth. Also partially controls SEP7 phosphorylation status and subsequent septin ring dynamics. Required for virulence and especially mediates dynamic adhesion to endothelium of blood vessels during circulation. The protein is Hypha-specific G1 cyclin-related protein 1 (HGC1) of Candida albicans (strain SC5314 / ATCC MYA-2876) (Yeast).